Reading from the N-terminus, the 239-residue chain is uncharacterized protein (239 aa).

A signal peptide spans 1–23; the sequence is MKTMVAMLLAAVGVAVSASSTLA. Residues 220-230 are compositionally biased toward basic and acidic residues; it reads AHPKQTLRDQR. A disordered region spans residues 220 to 239; the sequence is AHPKQTLRDQRPAGGDEITK.

This is an uncharacterized protein from Sinorhizobium fredii (strain NBRC 101917 / NGR234).